We begin with the raw amino-acid sequence, 232 residues long: CMP-N,N'-diacetyllegionaminic acid synthase (232 aa).

Belongs to the CMP-NeuNAc synthase family.

The catalysed reaction is N,N-diacetyllegionaminate + CTP = CMP-N,N-diacetyllegionaminate + diphosphate. Its function is as follows. Involved in biosynthesis of legionaminic acid (5,7-diamino-3,5,7,9-tetradeoxy-D-glycero-D-galacto-non-2-ulosonic acid)(Leg), a sialic acid-like derivative that is incorporated into virulence-associated cell surface glycoconjugates such as lipopolysaccharide (LPS) which could be a key determinant in the ability of L.pneumophila to inhibit the fusion of phagosomes with lysosomes. LPS contains a majority alpha2,4-linked homomer of legionaminic acid. Catalyzes the conversion of N,N'-diacetyllegionaminic acid (Leg5Ac7Ac) and CTP into CMP-N,N'-diacetyllegionaminic acid (CMP-Leg5Ac7Ac). The polypeptide is CMP-N,N'-diacetyllegionaminic acid synthase (neuA) (Legionella pneumophila subsp. pneumophila (strain Philadelphia 1 / ATCC 33152 / DSM 7513)).